Here is a 199-residue protein sequence, read N- to C-terminus: Pyridoxal 5'-phosphate synthase subunit PdxT (199 aa).

47 to 49 is an L-glutamine binding site; it reads GES. Cysteine 79 functions as the Nucleophile in the catalytic mechanism. L-glutamine contacts are provided by residues arginine 106 and 133 to 134; that span reads IR. Active-site charge relay system residues include histidine 169 and glutamate 171.

Belongs to the glutaminase PdxT/SNO family. In the presence of PdxS, forms a dodecamer of heterodimers. Only shows activity in the heterodimer.

The enzyme catalyses aldehydo-D-ribose 5-phosphate + D-glyceraldehyde 3-phosphate + L-glutamine = pyridoxal 5'-phosphate + L-glutamate + phosphate + 3 H2O + H(+). It carries out the reaction L-glutamine + H2O = L-glutamate + NH4(+). It functions in the pathway cofactor biosynthesis; pyridoxal 5'-phosphate biosynthesis. Functionally, catalyzes the hydrolysis of glutamine to glutamate and ammonia as part of the biosynthesis of pyridoxal 5'-phosphate. The resulting ammonia molecule is channeled to the active site of PdxS. The protein is Pyridoxal 5'-phosphate synthase subunit PdxT of Desulfitobacterium hafniense (strain Y51).